The following is a 63-amino-acid chain: MNFNKVFIFVALILAVFAGQSQAGWLKKIGKKIERVGQHTRDATIQVIGVAQQAANVAATARG.

The N-terminal stretch at 1–23 is a signal peptide; the sequence is MNFNKVFIFVALILAVFAGQSQA. An Arginine amide modification is found at arginine 62.

Belongs to the cecropin family.

Its subcellular location is the secreted. Functionally, sarcotoxins, which are potent bactericidal proteins, are produced in response to injury. They are cytotoxic to both Gram-positive and Gram-negative bacteria. In Sarcophaga peregrina (Flesh fly), this protein is Sarcotoxin-1B.